We begin with the raw amino-acid sequence, 140 residues long: Cytochrome B5 isoform D (140 aa).

One can recognise a Cytochrome b5 heme-binding domain in the interval 5–81; the sequence is GKVFTLSEVS…LDEYYVGDID (77 aa). Residues His40 and His64 each contribute to the heme site. A helical transmembrane segment spans residues 109 to 129; that stretch reads FVIKLLQFLVPLLILGLAFGI.

It belongs to the cytochrome b5 family. Interacts with CER1, BI-1, FAH1 and FAH2. Expressed in roots, stems, leaves, flowers and siliques.

It is found in the endoplasmic reticulum membrane. Its function is as follows. Membrane bound hemoprotein which function as an electron carrier for several membrane bound oxygenases, including fatty acid desaturases. The polypeptide is Cytochrome B5 isoform D (Arabidopsis thaliana (Mouse-ear cress)).